Here is a 144-residue protein sequence, read N- to C-terminus: Large ribosomal subunit protein uL16 (144 aa).

Belongs to the universal ribosomal protein uL16 family. In terms of assembly, part of the 50S ribosomal subunit.

Functionally, binds 23S rRNA and is also seen to make contacts with the A and possibly P site tRNAs. The protein is Large ribosomal subunit protein uL16 of Lysinibacillus sphaericus (strain C3-41).